A 349-amino-acid polypeptide reads, in one-letter code: Protein FAM98C (349 aa).

The interval Pro-313–Lys-349 is disordered.

The protein belongs to the FAM98 family.

The protein is Protein FAM98C (FAM98C) of Homo sapiens (Human).